Consider the following 690-residue polypeptide: Ras guanyl-releasing protein 3 (690 aa).

The 123-residue stretch at 3-125 folds into the N-terminal Ras-GEF domain; the sequence is SSGLGKAATL…SLIDISSIPS (123 aa). The region spanning 152–383 is the Ras-GEF domain; sequence EPIELAEHLT…YKLSLVLEPR (232 aa). 2 EF-hand domains span residues 420–455 and 458–484; these read HIRK…FPFL and FCVL…AKSQ. Ca(2+) contacts are provided by D433, D435, D437, Y439, D444, D462, D464, D466, and E473. The segment at 494–544 adopts a Phorbol-ester/DAG-type zinc-finger fold; the sequence is IHNFQEMTYLKPTFCEHCAGFLWGIIKQGYKCKDCGANCHKQCKDLLVLAC. Positions 667–690 are disordered; sequence VDRGTEFELDQDEGEETRQDGEDG.

It belongs to the RASGRP family.

Guanine nucleotide exchange factor (GEF) for Ras and Rap1. This chain is Ras guanyl-releasing protein 3 (RASGRP3), found in Homo sapiens (Human).